The following is a 377-amino-acid chain: Protein RecA (377 aa).

Position 76-83 (glycine 76–threonine 83) interacts with ATP.

The protein belongs to the RecA family.

It is found in the cytoplasm. Its function is as follows. Can catalyze the hydrolysis of ATP in the presence of single-stranded DNA, the ATP-dependent uptake of single-stranded DNA by duplex DNA, and the ATP-dependent hybridization of homologous single-stranded DNAs. It interacts with LexA causing its activation and leading to its autocatalytic cleavage. This Corynebacterium aurimucosum (strain ATCC 700975 / DSM 44827 / CIP 107346 / CN-1) (Corynebacterium nigricans) protein is Protein RecA.